The primary structure comprises 302 residues: MKKNRLNLNGVVVINKTQGLSSNKVLQKLKYLFNAQKAGHTGTLDPMATGVLPICFGRATKIAQYLLDSDKEYIATIKLGIETDSGDAEGEIIAKNADIPELTVEYLETVLAKFRGDIVQIPPMYSALKHNGQPLYKLAREGKAIEVKPRNINIYELELLEFNTDSLKIRVKCSKGTYIRSLAIDIGKALGCGGHLIALQRTQSGPFRIETALDLDNLKDLSFEQKLASIASVESVFIDKPIYSLVEEEKDDLYKRGLFADKSHLDGTVRIYDDEKFVAIAEFDKGKLISKKFFDQDIFISE.

Catalysis depends on aspartate 45, which acts as the Nucleophile.

It belongs to the pseudouridine synthase TruB family. Type 1 subfamily.

The catalysed reaction is uridine(55) in tRNA = pseudouridine(55) in tRNA. Responsible for synthesis of pseudouridine from uracil-55 in the psi GC loop of transfer RNAs. The chain is tRNA pseudouridine synthase B from Francisella philomiragia subsp. philomiragia (strain ATCC 25017 / CCUG 19701 / FSC 153 / O#319-036).